We begin with the raw amino-acid sequence, 577 residues long: Proline--tRNA ligase (577 aa).

The protein belongs to the class-II aminoacyl-tRNA synthetase family. ProS type 1 subfamily. Homodimer.

Its subcellular location is the cytoplasm. The catalysed reaction is tRNA(Pro) + L-proline + ATP = L-prolyl-tRNA(Pro) + AMP + diphosphate. Catalyzes the attachment of proline to tRNA(Pro) in a two-step reaction: proline is first activated by ATP to form Pro-AMP and then transferred to the acceptor end of tRNA(Pro). As ProRS can inadvertently accommodate and process non-cognate amino acids such as alanine and cysteine, to avoid such errors it has two additional distinct editing activities against alanine. One activity is designated as 'pretransfer' editing and involves the tRNA(Pro)-independent hydrolysis of activated Ala-AMP. The other activity is designated 'posttransfer' editing and involves deacylation of mischarged Ala-tRNA(Pro). The misacylated Cys-tRNA(Pro) is not edited by ProRS. In Limosilactobacillus reuteri (strain DSM 20016) (Lactobacillus reuteri), this protein is Proline--tRNA ligase.